Here is a 102-residue protein sequence, read N- to C-terminus: Large ribosomal subunit protein bL21 (102 aa).

Over residues 80–91 (KNSKRKKGHRQP) the composition is skewed to basic residues. Residues 80–102 (KNSKRKKGHRQPYTKLTIDKINA) are disordered.

The protein belongs to the bacterial ribosomal protein bL21 family. In terms of assembly, part of the 50S ribosomal subunit. Contacts protein L20.

In terms of biological role, this protein binds to 23S rRNA in the presence of protein L20. The chain is Large ribosomal subunit protein bL21 from Staphylococcus aureus (strain Mu3 / ATCC 700698).